A 1004-amino-acid polypeptide reads, in one-letter code: UPF0182 protein Noca_1530 (1004 aa).

The interval 1 to 20 (MSELFDEAPRDPGPPARSGS) is disordered. 7 helical membrane-spanning segments follow: residues 26 to 46 (LIVT…FAGI), 71 to 91 (VLFF…IYLA), 120 to 140 (TWLL…SAIG), 183 to 203 (MAVL…YGGI), 212 to 232 (LSGA…LAKA), 261 to 281 (VLPA…LFFV), and 293 to 313 (VGLA…PGIV). Disordered regions lie at residues 899–924 (GVST…PPAT) and 974–1004 (LGQK…SPSS). Low complexity-rich tracts occupy residues 903 to 916 (GPGT…QPGD) and 979 to 1004 (GSAG…SPSS).

The protein belongs to the UPF0182 family.

Its subcellular location is the cell membrane. The chain is UPF0182 protein Noca_1530 from Nocardioides sp. (strain ATCC BAA-499 / JS614).